We begin with the raw amino-acid sequence, 235 residues long: tRNA1(Val) (adenine(37)-N6)-methyltransferase (235 aa).

It belongs to the methyltransferase superfamily. tRNA (adenine-N(6)-)-methyltransferase family.

It localises to the cytoplasm. It catalyses the reaction adenosine(37) in tRNA1(Val) + S-adenosyl-L-methionine = N(6)-methyladenosine(37) in tRNA1(Val) + S-adenosyl-L-homocysteine + H(+). In terms of biological role, specifically methylates the adenine in position 37 of tRNA(1)(Val) (anticodon cmo5UAC). This Flavobacterium johnsoniae (strain ATCC 17061 / DSM 2064 / JCM 8514 / BCRC 14874 / CCUG 350202 / NBRC 14942 / NCIMB 11054 / UW101) (Cytophaga johnsonae) protein is tRNA1(Val) (adenine(37)-N6)-methyltransferase.